A 298-amino-acid polypeptide reads, in one-letter code: Probable GTP 3',8-cyclase (298 aa).

A Radical SAM core domain is found at 4–227; sequence RYGREIRSFR…MQNRKKYVID (224 aa). R13 contributes to the GTP binding site. The [4Fe-4S] cluster site is built by C20 and C24. Position 26 (Y26) interacts with S-adenosyl-L-methionine. C27 is a binding site for [4Fe-4S] cluster. Residue K61 participates in GTP binding. G65 is an S-adenosyl-L-methionine binding site. T91 lines the GTP pocket. S-adenosyl-L-methionine is bound at residue S115. K152 lines the GTP pocket. 2 residues coordinate [4Fe-4S] cluster: C243 and C246. 248–250 contributes to the GTP binding site; it reads RIR. C260 provides a ligand contact to [4Fe-4S] cluster.

This sequence belongs to the radical SAM superfamily. MoaA family. It depends on [4Fe-4S] cluster as a cofactor.

The catalysed reaction is GTP + AH2 + S-adenosyl-L-methionine = (8S)-3',8-cyclo-7,8-dihydroguanosine 5'-triphosphate + 5'-deoxyadenosine + L-methionine + A + H(+). It participates in cofactor biosynthesis; molybdopterin biosynthesis. Its function is as follows. Catalyzes the cyclization of GTP to (8S)-3',8-cyclo-7,8-dihydroguanosine 5'-triphosphate. The chain is Probable GTP 3',8-cyclase from Methanococcus maripaludis (strain C6 / ATCC BAA-1332).